The primary structure comprises 188 residues: Elongation factor P (188 aa).

It belongs to the elongation factor P family.

The protein resides in the cytoplasm. The protein operates within protein biosynthesis; polypeptide chain elongation. Its function is as follows. Involved in peptide bond synthesis. Stimulates efficient translation and peptide-bond synthesis on native or reconstituted 70S ribosomes in vitro. Probably functions indirectly by altering the affinity of the ribosome for aminoacyl-tRNA, thus increasing their reactivity as acceptors for peptidyl transferase. The polypeptide is Elongation factor P (Sulfurovum sp. (strain NBC37-1)).